A 1040-amino-acid chain; its full sequence is Multidrug resistance protein MdtB (1040 aa).

The next 12 membrane-spanning stretches (helical) occupy residues 16-36, 342-362, 369-389, 396-416, 440-460, 472-492, 537-557, 869-889, 890-910, 911-931, 968-988, and 998-1018; these read FIMR…AGII, DTQF…YVFL, IIPA…MVFL, LTLM…IVVI, IGFT…PLLF, FAVT…TLTP, WATL…WIVI, LIVA…ESFI, HPVT…LALM, LSGS…IGIV, ILMT…STGV, and IGMV…TPVI.

This sequence belongs to the resistance-nodulation-cell division (RND) (TC 2.A.6) family. MdtB subfamily. As to quaternary structure, part of a tripartite efflux system composed of MdtA, MdtB and MdtC. MdtB forms a heteromultimer with MdtC.

It localises to the cell inner membrane. The sequence is that of Multidrug resistance protein MdtB from Enterobacter sp. (strain 638).